We begin with the raw amino-acid sequence, 308 residues long: tRNA dimethylallyltransferase (308 aa).

16–23 serves as a coordination point for ATP; that stretch reads GPTASGKT. 18–23 contacts substrate; that stretch reads TASGKT. Positions 41–44 are interaction with substrate tRNA; the sequence is DSQQ.

Belongs to the IPP transferase family. As to quaternary structure, monomer. Mg(2+) serves as cofactor.

The enzyme catalyses adenosine(37) in tRNA + dimethylallyl diphosphate = N(6)-dimethylallyladenosine(37) in tRNA + diphosphate. Catalyzes the transfer of a dimethylallyl group onto the adenine at position 37 in tRNAs that read codons beginning with uridine, leading to the formation of N6-(dimethylallyl)adenosine (i(6)A). This is tRNA dimethylallyltransferase from Myxococcus xanthus (strain DK1622).